The following is a 514-amino-acid chain: Alpha-amylase (514 aa).

Positions 1-31 (MIQKRKRTVSFRLVLMCTLLFVSLPITKTSA) are cleaved as a signal peptide. 8 residues coordinate Ca(2+): N133, D190, A212, D214, D225, D231, D233, and D235. D190 provides a ligand contact to Na(+). Residues D214, D225, and D231 each contribute to the Na(+) site. Catalysis depends on D262, which acts as the Nucleophile. H266 serves as a coordination point for Ca(2+). E292 functions as the Proton donor in the catalytic mechanism. Residues G331, D438, and D461 each coordinate Ca(2+).

It belongs to the glycosyl hydrolase 13 family. Monomer. Requires Ca(2+) as cofactor. The cofactor is Na(+).

The protein localises to the secreted. The catalysed reaction is Endohydrolysis of (1-&gt;4)-alpha-D-glucosidic linkages in polysaccharides containing three or more (1-&gt;4)-alpha-linked D-glucose units.. This is Alpha-amylase from Bacillus amyloliquefaciens (Bacillus velezensis).